Here is a 248-residue protein sequence, read N- to C-terminus: Pulmonary surfactant-associated protein A2 (248 aa).

An N-terminal signal peptide occupies residues 1–20; it reads MWLCPLALTLILMAASGAAC. The 73-residue stretch at 28 to 100 folds into the Collagen-like domain; the sequence is GSPGIPGTPG…AGERGPPGLP (73 aa). 4-hydroxyproline is present on residues P30, P33, P36, P42, P54, P57, P63, P67, and P70. Positions 33–101 are disordered; it reads PGTPGSHGLP…GERGPPGLPA (69 aa). Residues 42 to 51 are compositionally biased toward basic and acidic residues; it reads PGRDGRDGVK. Over residues 54–70 the composition is skewed to pro residues; it reads PGPPGPMGPPGETPCPP. Positions 71–82 are enriched in low complexity; sequence GNNGLPGAPGVP. The segment covering 84–93 has biased composition (basic and acidic residues); the sequence is ERGEKGEAGE. One can recognise a C-type lectin domain in the interval 132–248; the sequence is MTVGEKVFSS…LYSRLTICEF (117 aa). Cystine bridges form between C155-C246 and C224-C238. An N-linked (GlcNAc...) asparagine glycan is attached at N207.

It belongs to the SFTPA family. Oligomeric complex of 6 set of homotrimers. N-acetylated.

The protein resides in the secreted. It is found in the extracellular space. It localises to the extracellular matrix. The protein localises to the surface film. Functionally, in presence of calcium ions, it binds to surfactant phospholipids and contributes to lower the surface tension at the air-liquid interface in the alveoli of the mammalian lung and is essential for normal respiration. The chain is Pulmonary surfactant-associated protein A2 (SFTPA2) from Homo sapiens (Human).